A 373-amino-acid chain; its full sequence is MDLPRRWLFRMLLLVATSSGILLMLYSSAGQQSPETQVPARNMAYPRAFFDPKPPNSENRKSRLCQHSLSLAIQKDRRFRSLFDLSTPVLLWEGLFTQELWNNLSQHKVPYGWQGLSHEVIASTLRLLKSPESGELFGAPRKLPLSCIRCAVVGNGGILNGSRQGQKIDAHDYVFRLNGAITEGFERDVGTKTSFYGFTVNTMKNSLISYAKLGFTSVPQGQNLRYIFIPSSIRDYLMLRSAILGVPVPEGPDKGDRPHTYFGPETSASKFKLLHPDFISYLTERFLKSKLINTRFGDMYMPSTGALMLLTALHTCDQVSAYGFITNNYQKYSDHYFEREKKPLIFYANHDLSLEASLWRDLHNAGILWLYQR.

Residues Met-1–Arg-6 lie on the Cytoplasmic side of the membrane. A helical; Signal-anchor for type II membrane protein transmembrane segment spans residues Trp-7 to Ser-27. Topologically, residues Ser-28–Arg-373 are lumenal. Disulfide bonds link Cys-65/Cys-147 and Cys-150/Cys-316. N-linked (GlcNAc...) asparagine glycosylation occurs at Asn-103. Asn-155 is a CMP-N-acetyl-beta-neuraminate binding site. N-linked (GlcNAc...) asparagine glycosylation occurs at Asn-160. CMP-N-acetyl-beta-neuraminate-binding residues include Asn-178, Ser-303, and His-335.

Belongs to the glycosyltransferase 29 family. In terms of tissue distribution, highly expressed in lactating mammary gland and adult testis. Lower levels in kidney.

It is found in the golgi apparatus membrane. It catalyses the reaction a beta-D-galactosyl-(1-&gt;3)-N-acetyl-alpha-D-galactosaminyl derivative + CMP-N-acetyl-beta-neuraminate = a beta-D-galactosyl-(1-&gt;3)-[N-acetyl-alpha-neuraminyl-(2-&gt;6)]-N-acetyl-alpha-D-galactosaminyl derivative + CMP + H(+). The enzyme catalyses a 3-O-[N-acetyl-alpha-D-galactosaminyl]-L-threonyl-[protein] + CMP-N-acetyl-beta-neuraminate = a 3-O-[N-acetyl-alpha-neuraminosyl-(2-&gt;6)-N-acetyl-alpha-D-galactosaminyl]-L-threonyl-[protein] + CMP + H(+). It carries out the reaction a 3-O-[N-acetyl-alpha-neuraminyl-(2-&gt;3)-beta-D-galactosyl-(1-&gt;3)-N-acetyl-alpha-D-galactosaminyl]-L-threonyl-[protein] + CMP-N-acetyl-beta-neuraminate = a 3-O-{alpha-Neu5Ac-(2-&gt;3)-beta-D-Gal-(1-&gt;3)-[alpha-Neu5Ac-(2-&gt;6)]-alpha-D-GalNAc}-L-threonyl-[protein] + CMP + H(+). The protein operates within protein modification; protein glycosylation. In terms of biological role, catalyzes the transfer of N-acetylneuraminyl groups onto glycan chains in glycoproteins. Conjugates sialic acid with an alpha-2-6 linkage to N-acetylgalactosamine (GalNAc) glycan chains linked to serine or threonine in glycoproteins. Sialylates alphaGalNAc- and Galbeta1-&gt;3GalNAc-O-Ser/Thr epitopes also known as Tn and T antigens. This Mus musculus (Mouse) protein is Alpha-N-acetylgalactosaminide alpha-2,6-sialyltransferase 2 (St6galnac2).